Reading from the N-terminus, the 375-residue chain is Sulfite efflux pump SSU1 (375 aa).

Over 1-25 (MPSGSGFHNIEEAGEKARKRDDWIA) the chain is Cytoplasmic. The helical transmembrane segment at 26-46 (ISNFHPGWFSVNMGTGITAIL) threads the bilayer. The Extracellular segment spans residues 47–59 (LQNLPYQFPGLHY). A helical transmembrane segment spans residues 60–80 (IAVVLFILNVIIFFLFLTISI). At 81–101 (TRYCLWPDKFKAMLAHPAHSM) the chain is on the cytoplasmic side. A helical membrane pass occupies residues 102–122 (LLGTFPMGFATIINCIVFICV). Residues 123 to 135 (PVWGEWASRFAWG) are Extracellular-facing. A helical membrane pass occupies residues 136–156 (LWWIDAAVSVAICYFVPFMLM). The Cytoplasmic portion of the chain corresponds to 157 to 167 (TKHTSSLETMT). Residues 168–188 (AAWLLPIVAPVVAAASGGVVA) traverse the membrane as a helical segment. Residues 189 to 200 (DSLQNDTHALIT) lie on the Extracellular side of the membrane. N-linked (GlcNAc...) asparagine glycosylation is present at asparagine 193. The helical transmembrane segment at 201–221 (ILVCYAMWGSAVPLAMVILVI) threads the bilayer. At 222-234 (YFQRLAIHKLVPR) the chain is on the cytoplasmic side. The chain crosses the membrane as a helical span at residues 235–255 (AAIVSALLPIGPLGQGGFGLM). The Extracellular portion of the chain corresponds to 256-277 (QLGVVAKRVFPRLDFLAPIAGD). Residues 278–298 (IFYVMGAFIAMIMWGFGLIWL) form a helical membrane-spanning segment. Residues 299–309 (WFALASFTRGK) lie on the Cytoplasmic side of the membrane. The chain crosses the membrane as a helical span at residues 310 to 330 (FYFNIGWWAFTFPLGVFTTAT). Over 331 to 343 (TQMGKEFNSPFFD) the chain is Extracellular. Residues 344 to 364 (ILGTFFSIVVTCMWVLVFALT) traverse the membrane as a helical segment. The Cytoplasmic portion of the chain corresponds to 365 to 375 (VYKSCTKELFR).

Belongs to the tellurite-resistance/dicarboxylate transporter (TDT) family.

It localises to the cell membrane. Functionally, sulphite efflux pump required for the secretion of sulphite as a reducing agent. In the presence of sulphite, cystine in keratin is directly cleaved to cysteine and S-sulphocysteine, and thereby, reduced proteins become accessible to hydrolysis by a variety of secreted endo- and exoproteases. Excretion of sulphite mediated by an efflux pump also represents a detoxification pathway for dermatophytes during infection of the epidermal stratum corneum, hair and nails, which are rich in cysteine. This Trichophyton rubrum (Athlete's foot fungus) protein is Sulfite efflux pump SSU1 (SSU1).